A 466-amino-acid polypeptide reads, in one-letter code: Adenosylhomocysteinase (466 aa).

Residues Thr57, Asp132, and Glu192 each contribute to the substrate site. 193-195 (TTT) contributes to the NAD(+) binding site. Substrate is bound by residues Lys222 and Asp226. NAD(+) is bound by residues Asn227, 256 to 261 (GYGDVG), Glu279, Asn314, 335 to 337 (IGH), and Asn380.

The protein belongs to the adenosylhomocysteinase family. Requires NAD(+) as cofactor.

The protein resides in the cytoplasm. It catalyses the reaction S-adenosyl-L-homocysteine + H2O = L-homocysteine + adenosine. Its pathway is amino-acid biosynthesis; L-homocysteine biosynthesis; L-homocysteine from S-adenosyl-L-homocysteine: step 1/1. Its function is as follows. May play a key role in the regulation of the intracellular concentration of adenosylhomocysteine. This is Adenosylhomocysteinase from Chromobacterium violaceum (strain ATCC 12472 / DSM 30191 / JCM 1249 / CCUG 213 / NBRC 12614 / NCIMB 9131 / NCTC 9757 / MK).